The sequence spans 248 residues: Large ribosomal subunit protein uL1 (248 aa).

It belongs to the universal ribosomal protein uL1 family. Part of the 50S ribosomal subunit.

In terms of biological role, binds directly to 23S rRNA. The L1 stalk is quite mobile in the ribosome, and is involved in E site tRNA release. Its function is as follows. Protein L1 is also a translational repressor protein, it controls the translation of the L11 operon by binding to its mRNA. This chain is Large ribosomal subunit protein uL1, found in Orientia tsutsugamushi (strain Boryong) (Rickettsia tsutsugamushi).